A 459-amino-acid polypeptide reads, in one-letter code: Alcohol acyl transferase 2 (459 aa).

Active-site proton acceptor residues include H164 and N385.

The protein belongs to the plant acyltransferase family. In terms of tissue distribution, highly expressed in the cortex and skin of ripe fruit.

Its function is as follows. Involved in the biosynthesis of volatile esters which confer ripe apple fruit flavor. Alcohol acyl transferase that can use a wide range of alcohols as substrate to produce esters. The chain is Alcohol acyl transferase 2 from Malus domestica (Apple).